The sequence spans 252 residues: 3-dehydroquinate dehydratase (252 aa).

3-dehydroquinate-binding positions include serine 21, glutamate 46–arginine 48, and arginine 82. Histidine 143 functions as the Proton donor/acceptor in the catalytic mechanism. Lysine 170 serves as the catalytic Schiff-base intermediate with substrate. 3-dehydroquinate contacts are provided by arginine 213, serine 232, and glutamine 236.

It belongs to the type-I 3-dehydroquinase family. As to quaternary structure, homodimer.

The enzyme catalyses 3-dehydroquinate = 3-dehydroshikimate + H2O. It participates in metabolic intermediate biosynthesis; chorismate biosynthesis; chorismate from D-erythrose 4-phosphate and phosphoenolpyruvate: step 3/7. Its function is as follows. Involved in the third step of the chorismate pathway, which leads to the biosynthesis of aromatic amino acids. Catalyzes the cis-dehydration of 3-dehydroquinate (DHQ) and introduces the first double bond of the aromatic ring to yield 3-dehydroshikimate. The sequence is that of 3-dehydroquinate dehydratase from Escherichia coli O139:H28 (strain E24377A / ETEC).